Consider the following 881-residue polypeptide: DNA replication helicase (881 aa).

Residues methionine 1–proline 26 form a disordered region. An ATP-binding site is contributed by glycine 96 to serine 103.

The protein belongs to the herpesviridae helicase family. In terms of assembly, associates with the primase and the primase-associated factor to form the helicase-primase complex.

It localises to the host nucleus. Component of the helicase/primase complex. Unwinds the DNA at the replication forks and generates single-stranded DNA for both leading and lagging strand synthesis. The primase synthesizes short RNA primers on the lagging strand that the polymerase elongates using dNTPs. Possesses helicase-like motifs and therefore may act as the helicase subunit of the complex. The polypeptide is DNA replication helicase (Human herpesvirus 2 (strain HG52) (HHV-2)).